A 164-amino-acid chain; its full sequence is Small ribosomal subunit protein uS5 (164 aa).

An S5 DRBM domain is found at 10-73; it reads IEERVVAINR…ESAKKNMIEV (64 aa).

It belongs to the universal ribosomal protein uS5 family. Part of the 30S ribosomal subunit. Contacts proteins S4 and S8.

Its function is as follows. With S4 and S12 plays an important role in translational accuracy. Located at the back of the 30S subunit body where it stabilizes the conformation of the head with respect to the body. The chain is Small ribosomal subunit protein uS5 from Streptococcus suis (strain 98HAH33).